The primary structure comprises 434 residues: Nicotinate phosphoribosyltransferase (434 aa).

Histidine 242 is subject to Phosphohistidine; by autocatalysis.

It belongs to the NAPRTase family. Transiently phosphorylated on a His residue during the reaction cycle. Phosphorylation strongly increases the affinity for substrates and increases the rate of nicotinate D-ribonucleotide production. Dephosphorylation regenerates the low-affinity form of the enzyme, leading to product release.

It catalyses the reaction nicotinate + 5-phospho-alpha-D-ribose 1-diphosphate + ATP + H2O = nicotinate beta-D-ribonucleotide + ADP + phosphate + diphosphate. It participates in cofactor biosynthesis; NAD(+) biosynthesis; nicotinate D-ribonucleotide from nicotinate: step 1/1. In terms of biological role, catalyzes the synthesis of beta-nicotinate D-ribonucleotide from nicotinate and 5-phospho-D-ribose 1-phosphate at the expense of ATP. The sequence is that of Nicotinate phosphoribosyltransferase from Brucella canis (strain ATCC 23365 / NCTC 10854 / RM-666).